Consider the following 399-residue polypeptide: Cell division protein DivIB (399 aa).

2 disordered regions span residues 1 to 23 and 35 to 119; these read MSKD…SEWQ and EEEA…ATKE. The Cytoplasmic portion of the chain corresponds to 1 to 133; sequence MSKDKKNEDK…AKIPGIHILR (133 aa). 2 stretches are compositionally biased toward basic and acidic residues: residues 35 to 65 and 75 to 119; these read EEEA…KQDQ and ESAK…ATKE. A helical transmembrane segment spans residues 134-154; the sequence is AFTILFPSLLLLFVSAYLLSP. Topologically, residues 155–399 are extracellular; that stretch reads YATMKDIRVE…NQTTQRSSRR (245 aa). The POTRA domain maps to 156-226; sequence ATMKDIRVEG…TKFTIKVKEY (71 aa). Positions 364–388 are enriched in basic and acidic residues; that stretch reads KAKQEAKEAEKKQEEEQKKQEEESN. Positions 364 to 399 are disordered; it reads KAKQEAKEAEKKQEEEQKKQEEESNRNQTTQRSSRR. Residues 389-399 show a composition bias toward polar residues; the sequence is RNQTTQRSSRR.

This sequence belongs to the FtsQ/DivIB family. DivIB subfamily.

The protein localises to the cell membrane. Its function is as follows. Cell division protein that may be involved in stabilizing or promoting the assembly of the division complex. This chain is Cell division protein DivIB, found in Streptococcus pneumoniae serotype 4 (strain ATCC BAA-334 / TIGR4).